A 106-amino-acid chain; its full sequence is uncharacterized protein (106 aa).

The interval 1-23 (MASGAPPLTQKTPSHARRKERRR) is disordered. Residues 14–23 (SHARRKERRR) show a composition bias toward basic residues.

This is an uncharacterized protein from Treponema pallidum (strain Nichols).